A 68-amino-acid polypeptide reads, in one-letter code: ATP synthase protein 8 (68 aa).

Residues 8–24 (VWPTIIMSMLLALFLLM) traverse the membrane as a helical segment. K54 is modified (N6-acetyllysine; alternate). Residue K54 is modified to N6-succinyllysine; alternate. The residue at position 57 (K57) is an N6-acetyllysine.

It belongs to the ATPase protein 8 family. As to quaternary structure, F-type ATPases have 2 components, CF(1) - the catalytic core - and CF(0) - the membrane proton channel. Component of an ATP synthase complex composed of ATP5PB, ATP5MC1, ATP5F1E, ATP5PD, ATP5ME, ATP5PF, ATP5MF, MT-ATP6, MT-ATP8, ATP5F1A, ATP5F1B, ATP5F1D, ATP5F1C, ATP5PO, ATP5MG, ATP5MK and ATP5MJ. Interacts with PRICKLE3.

It is found in the mitochondrion membrane. Mitochondrial membrane ATP synthase (F(1)F(0) ATP synthase or Complex V) produces ATP from ADP in the presence of a proton gradient across the membrane which is generated by electron transport complexes of the respiratory chain. F-type ATPases consist of two structural domains, F(1) - containing the extramembraneous catalytic core and F(0) - containing the membrane proton channel, linked together by a central stalk and a peripheral stalk. During catalysis, ATP synthesis in the catalytic domain of F(1) is coupled via a rotary mechanism of the central stalk subunits to proton translocation. Part of the complex F(0) domain. Minor subunit located with subunit a in the membrane. This is ATP synthase protein 8 (MT-ATP8) from Hylobates lar (Lar gibbon).